Here is an 81-residue protein sequence, read N- to C-terminus: ATP synthase subunit c, chloroplastic (81 aa).

Helical transmembrane passes span 3-23 and 57-77; these read PLIS…ASIG and LAFM…LLFA.

The protein belongs to the ATPase C chain family. As to quaternary structure, F-type ATPases have 2 components, F(1) - the catalytic core - and F(0) - the membrane proton channel. F(1) has five subunits: alpha(3), beta(3), gamma(1), delta(1), epsilon(1). F(0) has four main subunits: a(1), b(1), b'(1) and c(10-14). The alpha and beta chains form an alternating ring which encloses part of the gamma chain. F(1) is attached to F(0) by a central stalk formed by the gamma and epsilon chains, while a peripheral stalk is formed by the delta, b and b' chains.

It localises to the plastid. The protein localises to the chloroplast thylakoid membrane. F(1)F(0) ATP synthase produces ATP from ADP in the presence of a proton or sodium gradient. F-type ATPases consist of two structural domains, F(1) containing the extramembraneous catalytic core and F(0) containing the membrane proton channel, linked together by a central stalk and a peripheral stalk. During catalysis, ATP synthesis in the catalytic domain of F(1) is coupled via a rotary mechanism of the central stalk subunits to proton translocation. Its function is as follows. Key component of the F(0) channel; it plays a direct role in translocation across the membrane. A homomeric c-ring of between 10-14 subunits forms the central stalk rotor element with the F(1) delta and epsilon subunits. The sequence is that of ATP synthase subunit c, chloroplastic from Pinus koraiensis (Korean pine).